The sequence spans 447 residues: ATP-dependent protease ATPase subunit HslU (447 aa).

Residues Ile-17, 59–64 (GVGKTE), Asp-256, Glu-321, and Arg-393 each bind ATP.

It belongs to the ClpX chaperone family. HslU subfamily. As to quaternary structure, a double ring-shaped homohexamer of HslV is capped on each side by a ring-shaped HslU homohexamer. The assembly of the HslU/HslV complex is dependent on binding of ATP.

Its subcellular location is the cytoplasm. Its function is as follows. ATPase subunit of a proteasome-like degradation complex; this subunit has chaperone activity. The binding of ATP and its subsequent hydrolysis by HslU are essential for unfolding of protein substrates subsequently hydrolyzed by HslV. HslU recognizes the N-terminal part of its protein substrates and unfolds these before they are guided to HslV for hydrolysis. The sequence is that of ATP-dependent protease ATPase subunit HslU from Pseudomonas putida (strain W619).